The primary structure comprises 263 residues: Putative S-adenosyl-L-methionine-dependent methyltransferase Mjls_0079 (263 aa).

S-adenosyl-L-methionine contacts are provided by residues Asp-121 and 150-151 (ES).

The protein belongs to the UPF0677 family.

Its function is as follows. Exhibits S-adenosyl-L-methionine-dependent methyltransferase activity. This Mycobacterium sp. (strain JLS) protein is Putative S-adenosyl-L-methionine-dependent methyltransferase Mjls_0079.